The chain runs to 80 residues: Putative ATP-dependent Clp protease proteolytic subunit (80 aa).

The active site involves His19.

Belongs to the peptidase S14 family. In terms of assembly, component of the chloroplastic Clp protease core complex.

Its subcellular location is the plastid. The protein localises to the chloroplast. The catalysed reaction is Hydrolysis of proteins to small peptides in the presence of ATP and magnesium. alpha-casein is the usual test substrate. In the absence of ATP, only oligopeptides shorter than five residues are hydrolyzed (such as succinyl-Leu-Tyr-|-NHMec, and Leu-Tyr-Leu-|-Tyr-Trp, in which cleavage of the -Tyr-|-Leu- and -Tyr-|-Trp bonds also occurs).. Cleaves peptides in various proteins in a process that requires ATP hydrolysis. Has a chymotrypsin-like activity. Plays a major role in the degradation of misfolded proteins. This is Putative ATP-dependent Clp protease proteolytic subunit from Pinus strobus (Eastern white pine).